The following is a 301-amino-acid chain: GPN-loop GTPase 3 (301 aa).

13–18 (GAGKST) provides a ligand contact to GTP. The Gly-Pro-Asn (GPN)-loop; involved in dimer interface motif lies at 70–72 (GPN). 176 to 179 (SKMD) is a binding site for GTP. Residues 212-232 (IAEGQDAEDDESKAPDEKDQV) form a disordered region. Over residues 223 to 232 (SKAPDEKDQV) the composition is skewed to basic and acidic residues.

The protein belongs to the GPN-loop GTPase family. In terms of assembly, heterodimers with GPN1 or GPN2. Binds to RNA polymerase II (RNAPII).

In terms of biological role, small GTPase required for proper nuclear import of RNA polymerase II and III (RNAPII and RNAPIII). May act at an RNAP assembly step prior to nuclear import. This chain is GPN-loop GTPase 3, found in Gibberella zeae (strain ATCC MYA-4620 / CBS 123657 / FGSC 9075 / NRRL 31084 / PH-1) (Wheat head blight fungus).